A 125-amino-acid chain; its full sequence is Ribosome-binding factor A (125 aa).

Belongs to the RbfA family. Monomer. Binds 30S ribosomal subunits, but not 50S ribosomal subunits or 70S ribosomes.

Its subcellular location is the cytoplasm. Its function is as follows. One of several proteins that assist in the late maturation steps of the functional core of the 30S ribosomal subunit. Associates with free 30S ribosomal subunits (but not with 30S subunits that are part of 70S ribosomes or polysomes). Required for efficient processing of 16S rRNA. May interact with the 5'-terminal helix region of 16S rRNA. The chain is Ribosome-binding factor A from Chloroherpeton thalassium (strain ATCC 35110 / GB-78).